Here is a 370-residue protein sequence, read N- to C-terminus: Histidinol-phosphate aminotransferase (370 aa).

Lys230 is subject to N6-(pyridoxal phosphate)lysine.

Belongs to the class-II pyridoxal-phosphate-dependent aminotransferase family. Histidinol-phosphate aminotransferase subfamily. As to quaternary structure, homodimer. It depends on pyridoxal 5'-phosphate as a cofactor.

The catalysed reaction is L-histidinol phosphate + 2-oxoglutarate = 3-(imidazol-4-yl)-2-oxopropyl phosphate + L-glutamate. Its pathway is amino-acid biosynthesis; L-histidine biosynthesis; L-histidine from 5-phospho-alpha-D-ribose 1-diphosphate: step 7/9. The polypeptide is Histidinol-phosphate aminotransferase (Leptospira interrogans serogroup Icterohaemorrhagiae serovar Lai (strain 56601)).